Reading from the N-terminus, the 187-residue chain is Ribosome-recycling factor (187 aa).

The protein belongs to the RRF family.

The protein resides in the cytoplasm. Its function is as follows. Responsible for the release of ribosomes from messenger RNA at the termination of protein biosynthesis. May increase the efficiency of translation by recycling ribosomes from one round of translation to another. This chain is Ribosome-recycling factor, found in Petrotoga mobilis (strain DSM 10674 / SJ95).